The primary structure comprises 109 residues: NAD(P)H-quinone oxidoreductase subunit M (109 aa).

This sequence belongs to the complex I NdhM subunit family. In terms of assembly, NDH-1 can be composed of about 15 different subunits; different subcomplexes with different compositions have been identified which probably have different functions.

It localises to the cellular thylakoid membrane. It carries out the reaction a plastoquinone + NADH + (n+1) H(+)(in) = a plastoquinol + NAD(+) + n H(+)(out). The catalysed reaction is a plastoquinone + NADPH + (n+1) H(+)(in) = a plastoquinol + NADP(+) + n H(+)(out). In terms of biological role, NDH-1 shuttles electrons from an unknown electron donor, via FMN and iron-sulfur (Fe-S) centers, to quinones in the respiratory and/or the photosynthetic chain. The immediate electron acceptor for the enzyme in this species is believed to be plastoquinone. Couples the redox reaction to proton translocation, and thus conserves the redox energy in a proton gradient. Cyanobacterial NDH-1 also plays a role in inorganic carbon-concentration. This chain is NAD(P)H-quinone oxidoreductase subunit M, found in Microcystis aeruginosa (strain NIES-843 / IAM M-2473).